Here is a 748-residue protein sequence, read N- to C-terminus: SNF-related serine/threonine-protein kinase (748 aa).

Residues 16–269 (YDLDKTLGRG…LEEIESHPWL (254 aa)) form the Protein kinase domain. Residues 22–30 (LGRGHFAVV) and Lys-45 each bind ATP. Asp-139 serves as the catalytic Proton acceptor. Position 162 is a phosphoserine (Ser-162). Thr-173 is subject to Phosphothreonine; by LKB1. A UBA domain is found at 291-334 (SEEEHNSIIQRMVLGDIADRDAIVEALETNRYNHITATYFLLAE). 5 positions are modified to phosphoserine: Ser-362, Ser-390, Ser-482, Ser-495, and Ser-518. The tract at residues 383 to 415 (SHATVPQSPARAGDNVLNGHRSKGLCDPAKKDE) is disordered. A compositionally biased stretch (acidic residues) spans 491–503 (EEGESDDEFDMDE). The interval 491 to 640 (EEGESDDEFD…SPSPASASAA (150 aa)) is disordered. The segment covering 522-532 (VHKRYHRRKSQ) has biased composition (basic residues). Residues 533-542 (GRGSSCSSSE) are compositionally biased toward low complexity. Omega-N-methylarginine is present on Arg-534. Positions 549-558 (ESRRRLDKDS) are enriched in basic and acidic residues. Composition is skewed to gly residues over residues 575 to 592 (GSEGDGGGQSKPSSGGGV) and 600 to 614 (QGTGGGSQGGSGGTP). The residue at position 606 (Ser-606) is a Phosphoserine. Over residues 629-640 (SSSPSPASASAA) the composition is skewed to low complexity.

Belongs to the protein kinase superfamily. CAMK Ser/Thr protein kinase family. Mg(2+) is required as a cofactor. Autophosphorylated. Phosphorylation on Thr-173 by STK11/LKB1 in complex with STE20-related adapter-alpha (STRADA) pseudo kinase and CAB39. Ubiquitously expressed in all tissues examined.

The protein resides in the nucleus. It carries out the reaction L-seryl-[protein] + ATP = O-phospho-L-seryl-[protein] + ADP + H(+). The catalysed reaction is L-threonyl-[protein] + ATP = O-phospho-L-threonyl-[protein] + ADP + H(+). Activated by phosphorylation on Thr-173. May play a role in hematopoietic cell proliferation or differentiation. Potential mediator of neuronal apoptosis. The chain is SNF-related serine/threonine-protein kinase from Mus musculus (Mouse).